Consider the following 477-residue polypeptide: Glycogen synthase (477 aa).

Residue Lys15 coordinates ADP-alpha-D-glucose.

This sequence belongs to the glycosyltransferase 1 family. Bacterial/plant glycogen synthase subfamily.

It carries out the reaction [(1-&gt;4)-alpha-D-glucosyl](n) + ADP-alpha-D-glucose = [(1-&gt;4)-alpha-D-glucosyl](n+1) + ADP + H(+). It participates in glycan biosynthesis; glycogen biosynthesis. Its function is as follows. Synthesizes alpha-1,4-glucan chains using ADP-glucose. The chain is Glycogen synthase from Salmonella arizonae (strain ATCC BAA-731 / CDC346-86 / RSK2980).